The chain runs to 131 residues: EG45-like domain containing protein (131 aa).

The signal sequence occupies residues 1-24 (MGVGTKVLVITTMAICLISSAAYA). The Expansin-like EG45; incomplete domain occupies 27–131 (GTATFYTPPY…GKIKIEFNQA (105 aa)). A disulfide bond links C73 and C85.

In terms of tissue distribution, expressed in the outer layer of xylem and the vascular cambial zone of roots, in shoot cambium, but not in leaves.

It localises to the secreted. In terms of biological role, might have a systemic role in water and solute homeostasis. Has no expansin-like activity. The polypeptide is EG45-like domain containing protein (CjBAp12) (Citrus jambhiri (Rough lemon)).